A 519-amino-acid chain; its full sequence is Ribonuclease Y (519 aa).

The chain crosses the membrane as a helical span at residues 3–23; that stretch reads LIEIVLLLVGMAVGAATGFIL. One can recognise a KH domain in the interval 209–272; sequence TVTAVSLPSE…QIAKMALERL (64 aa). Positions 335 to 428 constitute an HD domain; the sequence is VLQHSMEVAS…VQAADSLSGA (94 aa).

The protein belongs to the RNase Y family.

The protein localises to the cell membrane. Endoribonuclease that initiates mRNA decay. The chain is Ribonuclease Y from Oleidesulfovibrio alaskensis (strain ATCC BAA-1058 / DSM 17464 / G20) (Desulfovibrio alaskensis).